An 86-amino-acid chain; its full sequence is RNA-binding protein Hfq (86 aa).

In terms of domain architecture, Sm spans 9–68 (DPYLNTLRKERVPVSIYLVNGIKLQGQIESFDQFVILLKNTVSQMVYKHAISTVVPSRPV). The segment at 66–86 (RPVRLPSAGDSEQADAEPGNA) is disordered.

It belongs to the Hfq family. As to quaternary structure, homohexamer.

In terms of biological role, RNA chaperone that binds small regulatory RNA (sRNAs) and mRNAs to facilitate mRNA translational regulation in response to envelope stress, environmental stress and changes in metabolite concentrations. Also binds with high specificity to tRNAs. The sequence is that of RNA-binding protein Hfq from Ectopseudomonas mendocina (strain ymp) (Pseudomonas mendocina).